Here is a 289-residue protein sequence, read N- to C-terminus: Iodotyrosine deiodinase 1 (289 aa).

A helical membrane pass occupies residues 1 to 21 (MFLLTPVLVAVVCILMVWIFK). FMN contacts are provided by residues 100–104 (RRSVR) and 128–129 (SG). 3,5-diiodo-L-tyrosine contacts are provided by Ala-130, Glu-157, Tyr-161, and Lys-182. 3-iodo-L-tyrosine-binding residues include Ala-130, Glu-157, Tyr-161, and Lys-182. Residues 237–239 (TTT) and Arg-279 each bind FMN.

The protein belongs to the nitroreductase family. In terms of assembly, homodimer. Requires FMN as cofactor. In terms of tissue distribution, detected in thyroid (at protein level).

Its subcellular location is the cell membrane. It localises to the cytoplasmic vesicle membrane. The enzyme catalyses 2 iodide + L-tyrosine + 2 NADP(+) = 3,5-diiodo-L-tyrosine + 2 NADPH + H(+). It carries out the reaction iodide + L-tyrosine + NADP(+) = 3-iodo-L-tyrosine + NADPH. The catalysed reaction is 3-iodo-L-tyrosine + iodide + NADP(+) = 3,5-diiodo-L-tyrosine + NADPH + H(+). It catalyses the reaction L-tyrosine + chloride + NADP(+) = 3-chloro-L-tyrosine + NADPH. The enzyme catalyses bromide + L-tyrosine + NADP(+) = 3-bromo-L-tyrosine + NADPH. Catalyzes the dehalogenation of halotyrosines such as 3-bromo-L-tyrosine, 3-chloro-L-tyrosine, 3-iodo-L-tyrosine and 3,5-diiodo-L-tyrosine. During thyroid hormone biosynthesis, facilitates iodide salvage by catalysing the oxidative NADPH-dependent deiodination of the halogenated by-products of thyroid hormone production, monoiodotyrosine (L-MIT) and diiodotyrosine (L-DIT). The scavanged iodide can then reenter the hormone-producing pathways. Acts more efficiently on 3-iodo-L-tyrosine than 3,5-diiodo-L-tyrosine. The chain is Iodotyrosine deiodinase 1 (IYD) from Sus scrofa (Pig).